The chain runs to 95 residues: Aspartyl/glutamyl-tRNA(Asn/Gln) amidotransferase subunit C (95 aa).

This sequence belongs to the GatC family. Heterotrimer of A, B and C subunits.

The catalysed reaction is L-glutamyl-tRNA(Gln) + L-glutamine + ATP + H2O = L-glutaminyl-tRNA(Gln) + L-glutamate + ADP + phosphate + H(+). It carries out the reaction L-aspartyl-tRNA(Asn) + L-glutamine + ATP + H2O = L-asparaginyl-tRNA(Asn) + L-glutamate + ADP + phosphate + 2 H(+). Its function is as follows. Allows the formation of correctly charged Asn-tRNA(Asn) or Gln-tRNA(Gln) through the transamidation of misacylated Asp-tRNA(Asn) or Glu-tRNA(Gln) in organisms which lack either or both of asparaginyl-tRNA or glutaminyl-tRNA synthetases. The reaction takes place in the presence of glutamine and ATP through an activated phospho-Asp-tRNA(Asn) or phospho-Glu-tRNA(Gln). The sequence is that of Aspartyl/glutamyl-tRNA(Asn/Gln) amidotransferase subunit C from Chlorobium phaeobacteroides (strain BS1).